The sequence spans 192 residues: Signal peptidase complex subunit 2 (192 aa).

Residues 1–46 (MEEKKTESTNKNVKKANLLDHHSIKHILDESVSDIVTSRGYKEDVR) are Cytoplasmic-facing. A helical transmembrane segment spans residues 47–69 (LSNLKLILGTIIIVVALVAQFYN). At 70–78 (KKFPENRDF) the chain is on the lumenal side. A helical membrane pass occupies residues 79–98 (LIGCIALYVVLNAVLQLILY). Residues 99 to 192 (TKEKNAILFT…YAEEEPKKKK (94 aa)) lie on the Cytoplasmic side of the membrane.

Belongs to the SPCS2 family. As to quaternary structure, component of the signal peptidase complex (SPC) composed of a catalytic subunit SEC11 and three accessory subunits SPCS1, SPCS2 and SPCS3. The complex induces a local thinning of the ER membrane which is used to measure the length of the signal peptide (SP) h-region of protein substrates. This ensures the selectivity of the complex towards h-regions shorter than 18-20 amino acids.

Its subcellular location is the endoplasmic reticulum membrane. Component of the signal peptidase complex (SPC) which catalyzes the cleavage of N-terminal signal sequences from nascent proteins as they are translocated into the lumen of the endoplasmic reticulum. Enhances the enzymatic activity of SPC and facilitates the interactions between different components of the translocation site. The sequence is that of Signal peptidase complex subunit 2 from Arabidopsis thaliana (Mouse-ear cress).